The following is a 162-amino-acid chain: uncharacterized protein (162 aa).

4 helical membrane passes run 15 to 35 (VLAI…APAL), 43 to 63 (VCHF…FDLS), 70 to 90 (LTIL…QSFL), and 97 to 117 (LFDI…NILY).

Its subcellular location is the membrane. This is an uncharacterized protein from Schizosaccharomyces pombe (strain 972 / ATCC 24843) (Fission yeast).